We begin with the raw amino-acid sequence, 408 residues long: Argininosuccinate synthase (408 aa).

Residues 10–18 (AYSGGLDTS) and A37 contribute to the ATP site. The L-citrulline site is built by Y90 and S95. Residue G120 participates in ATP binding. L-aspartate contacts are provided by T122, N126, and D127. N126 is a binding site for L-citrulline. Residues R130, S181, S190, E266, and Y278 each coordinate L-citrulline.

It belongs to the argininosuccinate synthase family. Type 1 subfamily. In terms of assembly, homotetramer.

The protein localises to the cytoplasm. The catalysed reaction is L-citrulline + L-aspartate + ATP = 2-(N(omega)-L-arginino)succinate + AMP + diphosphate + H(+). It functions in the pathway amino-acid biosynthesis; L-arginine biosynthesis; L-arginine from L-ornithine and carbamoyl phosphate: step 2/3. This is Argininosuccinate synthase from Cereibacter sphaeroides (strain ATCC 17025 / ATH 2.4.3) (Rhodobacter sphaeroides).